The primary structure comprises 660 residues: GTP-binding protein BRASSINAZOLE INSENSITIVE PALE GREEN 2, chloroplastic (660 aa).

A chloroplast-targeting transit peptide spans 1–53 (MVVLISSTVTICNVKPKLEDGNFRVSRLIHRPEVPFFSGLSNEKKKKCAVSVM). Disordered regions lie at residues 127–158 (EGDEHVENDELAGFEMVDDDADEEEEGEDDEM) and 191–212 (NDVELDGFAPAGVGYGNVTEEK). Positions 130-158 (EHVENDELAGFEMVDDDADEEEEGEDDEM) are enriched in acidic residues. Residues 273-457 (STRLIKPMSN…MYDTPGLLHP (185 aa)) enclose the CP-type G domain.

It belongs to the TRAFAC class YlqF/YawG GTPase family. Binds to chloroplast 16S and 23S ribosomal RNAs. Mostly expressed in stems, petioles, leaves and flowers and, at low levels, also in roots.

It is found in the plastid. Its subcellular location is the chloroplast stroma. Functionally, required for brassinosteroid- (BR) mediated post-transcriptional and translational regulation in the chloroplast, including accumulation of chloroplast rRNA. Involved in chloroplast differentiation. In Arabidopsis thaliana (Mouse-ear cress), this protein is GTP-binding protein BRASSINAZOLE INSENSITIVE PALE GREEN 2, chloroplastic.